The chain runs to 445 residues: Methionine aminopeptidase 2 (445 aa).

The interval 1 to 89 is disordered; the sequence is MAAQAPVDEI…DPPRVLISQL (89 aa). Residues 60 to 74 are compositionally biased toward basic residues; the sequence is AKKKKKRKPKKKKKN. A substrate-binding site is contributed by His198. Residues Asp218, Asp229, and His298 each contribute to the a divalent metal cation site. His306 serves as a coordination point for substrate. A divalent metal cation is bound by residues Glu331 and Glu426.

This sequence belongs to the peptidase M24A family. Methionine aminopeptidase eukaryotic type 2 subfamily. Requires Co(2+) as cofactor. The cofactor is Zn(2+). It depends on Mn(2+) as a cofactor. Fe(2+) is required as a cofactor.

The protein localises to the cytoplasm. It carries out the reaction Release of N-terminal amino acids, preferentially methionine, from peptides and arylamides.. Functionally, cotranslationally removes the N-terminal methionine from nascent proteins. The N-terminal methionine is often cleaved when the second residue in the primary sequence is small and uncharged (Met-Ala-, Cys, Gly, Pro, Ser, Thr, or Val). The polypeptide is Methionine aminopeptidase 2 (Podospora anserina (strain S / ATCC MYA-4624 / DSM 980 / FGSC 10383) (Pleurage anserina)).